Consider the following 1288-residue polypeptide: Photoreceptor cilium actin regulator (1288 aa).

A lipid anchor (N-myristoyl glycine) is attached at Gly-2. Cys-3 carries S-palmitoyl cysteine lipidation. 9 disordered regions span residues 78–147, 368–401, 423–453, 467–527, 563–605, 686–707, 813–1109, 1132–1169, and 1190–1288; these read MGDP…KWKR, QTSW…QQSP, QPRA…LGTS, PHLS…PFQA, DWSE…SHVE, QKCN…NAIP, AAKS…EDSQ, EAKP…SSGP, and LRRT…EEVS. 3 stretches are compositionally biased toward polar residues: residues 96 to 109, 382 to 401, and 434 to 453; these read TKTS…SQSH, SVTS…QQSP, and CLSS…LGTS. Acidic residues predominate over residues 483-495; the sequence is DSEDSSPEEEEED. 4 stretches are compositionally biased toward polar residues: residues 848–857, 894–904, 927–946, and 966–976; these read SPESSKSTEN, SKSTASLTKPH, PPAT…QAEK, and PSGQNRTSESS. Residues 1018-1028 show a composition bias toward low complexity; that stretch reads PAQPSPSAVQT. Composition is skewed to pro residues over residues 1051–1063 and 1071–1094; these read PHQP…PPES and PSPP…PPMS. Residues 1097-1106 show a composition bias toward basic and acidic residues; the sequence is QEHKETRDSE. A compositionally biased stretch (polar residues) spans 1209-1226; it reads DPTSTSYESQLGQNSSSE. The span at 1268 to 1277 shows a compositional bias: basic and acidic residues; the sequence is RTGHIQDKSQ. Polar residues predominate over residues 1278–1288; it reads PEAQPQQEEVS.

Specifically expressed in retina.

It is found in the cell projection. Its subcellular location is the cilium. It localises to the photoreceptor outer segment. The protein localises to the photoreceptor inner segment. Its function is as follows. Plays an essential role for normal photoreceptor cell maintenance and vision. This is Photoreceptor cilium actin regulator from Homo sapiens (Human).